Consider the following 792-residue polypeptide: Phenylalanine--tRNA ligase beta subunit (792 aa).

The 112-residue stretch at 39 to 150 (APAFHKVVVA…PDAPVGTDFR (112 aa)) folds into the tRNA-binding domain. The B5 domain maps to 405–480 (PARDPIRLGL…RMYGYNRIAA (76 aa)). The Mg(2+) site is built by D458, D464, E467, and E468. An FDX-ACB domain is found at 698 to 791 (SKYPPIRRDI…LENRFGARLR (94 aa)).

Belongs to the phenylalanyl-tRNA synthetase beta subunit family. Type 1 subfamily. Tetramer of two alpha and two beta subunits. The cofactor is Mg(2+).

The protein localises to the cytoplasm. It catalyses the reaction tRNA(Phe) + L-phenylalanine + ATP = L-phenylalanyl-tRNA(Phe) + AMP + diphosphate + H(+). This is Phenylalanine--tRNA ligase beta subunit from Nitrosospira multiformis (strain ATCC 25196 / NCIMB 11849 / C 71).